The following is a 500-amino-acid chain: ATP synthase subunit alpha (500 aa).

Residue G169–T176 participates in ATP binding.

The protein belongs to the ATPase alpha/beta chains family. In terms of assembly, F-type ATPases have 2 components, CF(1) - the catalytic core - and CF(0) - the membrane proton channel. CF(1) has five subunits: alpha(3), beta(3), gamma(1), delta(1), epsilon(1). CF(0) has three main subunits: a(1), b(2) and c(9-12). The alpha and beta chains form an alternating ring which encloses part of the gamma chain. CF(1) is attached to CF(0) by a central stalk formed by the gamma and epsilon chains, while a peripheral stalk is formed by the delta and b chains.

It localises to the cell membrane. The catalysed reaction is ATP + H2O + 4 H(+)(in) = ADP + phosphate + 5 H(+)(out). In terms of biological role, produces ATP from ADP in the presence of a proton gradient across the membrane. The alpha chain is a regulatory subunit. The protein is ATP synthase subunit alpha of Lactococcus lactis subsp. cremoris (strain SK11).